The following is a 113-amino-acid chain: Dolichyl-diphosphooligosaccharide--protein glycosyltransferase subunit DAD1 (113 aa).

Ser-2 bears the N-acetylserine mark. The Cytoplasmic portion of the chain corresponds to 2 to 30; sequence SASVLSVISRFLEEYLSSTPQRLKLLDAY. Residues 31–51 form a helical membrane-spanning segment; sequence LLYILLTGALQFGYCLLVGTF. Residue Pro-52 is a topological domain, lumenal. Residues 53 to 73 traverse the membrane as a helical segment; the sequence is FNSFLSGFISCVGSFILAVCL. At 74-92 the chain is on the cytoplasmic side; that stretch reads RIQINPQNKADFQGISPER. Residues 93-113 traverse the membrane as a helical segment; the sequence is AFADFLFASTILHLVVMNFVG.

This sequence belongs to the DAD/OST2 family. In terms of assembly, component of the oligosaccharyltransferase (OST) complex. OST exists in two different complex forms which contain common core subunits RPN1, RPN2, OST48, OST4, DAD1 and TMEM258, either STT3A or STT3B as catalytic subunits, and form-specific accessory subunits. STT3A complex assembly occurs through the formation of 3 subcomplexes. Subcomplex 1 contains RPN1 and TMEM258, subcomplex 2 contains the STT3A-specific subunits STT3A, DC2/OSTC, and KCP2 as well as the core subunit OST4, and subcomplex 3 contains RPN2, DAD1, and OST48. The STT3A complex can form stable complexes with the Sec61 complex or with both the Sec61 and TRAP complexes.

The protein resides in the endoplasmic reticulum membrane. It participates in protein modification; protein glycosylation. Subunit of the oligosaccharyl transferase (OST) complex that catalyzes the initial transfer of a defined glycan (Glc(3)Man(9)GlcNAc(2) in eukaryotes) from the lipid carrier dolichol-pyrophosphate to an asparagine residue within an Asn-X-Ser/Thr consensus motif in nascent polypeptide chains, the first step in protein N-glycosylation. N-glycosylation occurs cotranslationally and the complex associates with the Sec61 complex at the channel-forming translocon complex that mediates protein translocation across the endoplasmic reticulum (ER). All subunits are required for a maximal enzyme activity. The chain is Dolichyl-diphosphooligosaccharide--protein glycosyltransferase subunit DAD1 from Sus scrofa (Pig).